A 215-amino-acid chain; its full sequence is 3-dehydroquinate dehydratase (215 aa).

Residues 30–32 (EVR) and Arg-62 contribute to the 3-dehydroquinate site. The Proton donor/acceptor role is filled by His-114. Catalysis depends on Lys-140, which acts as the Schiff-base intermediate with substrate. 2 residues coordinate 3-dehydroquinate: Arg-178 and Gln-201.

It belongs to the type-I 3-dehydroquinase family. In terms of assembly, homodimer.

The catalysed reaction is 3-dehydroquinate = 3-dehydroshikimate + H2O. It functions in the pathway metabolic intermediate biosynthesis; chorismate biosynthesis; chorismate from D-erythrose 4-phosphate and phosphoenolpyruvate: step 3/7. Functionally, involved in the third step of the chorismate pathway, which leads to the biosynthesis of aromatic amino acids. Catalyzes the cis-dehydration of 3-dehydroquinate (DHQ) and introduces the first double bond of the aromatic ring to yield 3-dehydroshikimate. This Methanopyrus kandleri (strain AV19 / DSM 6324 / JCM 9639 / NBRC 100938) protein is 3-dehydroquinate dehydratase.